A 127-amino-acid polypeptide reads, in one-letter code: Fumarate reductase subunit C (127 aa).

The next 3 helical transmembrane spans lie at 30–50, 67–87, and 107–127; these read ATVL…GSLV, IVVA…QTFF, and VVVL…LVIV.

This sequence belongs to the FrdC family. Part of an enzyme complex containing four subunits: a flavoprotein (FrdA), an iron-sulfur protein (FrdB), and two hydrophobic anchor proteins (FrdC and FrdD).

It is found in the cell inner membrane. Anchors the catalytic components of the fumarate reductase complex to the cell membrane, binds quinones. This Aliivibrio fischeri (strain ATCC 700601 / ES114) (Vibrio fischeri) protein is Fumarate reductase subunit C.